The primary structure comprises 222 residues: MASSSLSTLCSSTSSSLHPNSKLSHSLSAKLSSKANVSVQFLGKKQSPLLSSTPRFLTVIAMAPPKPGGKAKKVVGVIKLALEAGKATPAPPVGPALGSKGVNIMAFCKDYNARTADKAGYIIPVEITVFDDKSFTFILKTPPASVLLLKAAGVEKGSKDPQQDKVGVITIDQLRTIAAEKLPDLNCTTIESAMRIIAGTAANMGIDIDPPILEPKKKAVLL.

The tract at residues 1–20 (MASSSLSTLCSSTSSSLHPN) is disordered. A chloroplast-targeting transit peptide spans 1–62 (MASSSLSTLC…TPRFLTVIAM (62 aa)).

This sequence belongs to the universal ribosomal protein uL11 family. As to quaternary structure, part of the ribosomal stalk of the 50S ribosomal subunit. Interacts with L10 and the large rRNA to form the base of the stalk. L10 forms an elongated spine to which L12 dimers bind in a sequential fashion forming a multimeric L10(L12)X complex.

Its subcellular location is the plastid. It localises to the chloroplast. Forms part of the ribosomal stalk which helps the ribosome interact with GTP-bound translation factors. The polypeptide is Large ribosomal subunit protein uL11c (RPL11) (Arabidopsis thaliana (Mouse-ear cress)).